A 142-amino-acid polypeptide reads, in one-letter code: Putative pre-16S rRNA nuclease (142 aa).

Belongs to the YqgF nuclease family.

It is found in the cytoplasm. Its function is as follows. Could be a nuclease involved in processing of the 5'-end of pre-16S rRNA. The protein is Putative pre-16S rRNA nuclease of Nitratidesulfovibrio vulgaris (strain DP4) (Desulfovibrio vulgaris).